The primary structure comprises 393 residues: S-adenosylmethionine synthase 2 (393 aa).

Residue glutamate 9 participates in Mg(2+) binding. Histidine 15 contacts ATP. Residue glutamate 43 coordinates K(+). L-methionine is bound by residues glutamate 56 and glutamine 99. ATP contacts are provided by residues 167–169 (DGK), 235–238 (SGRF), aspartate 246, 252–253 (RK), alanine 269, lysine 273, and lysine 277. Aspartate 246 lines the L-methionine pocket. Position 277 (lysine 277) interacts with L-methionine.

This sequence belongs to the AdoMet synthase family. In terms of assembly, homotetramer. Interacts with GRF3. The cofactor is Mn(2+). It depends on Mg(2+) as a cofactor. Co(2+) serves as cofactor. K(+) is required as a cofactor. In terms of tissue distribution, highly expressed in stems and roots. Detected in trichomes (at the protein level).

Its subcellular location is the cytoplasm. The enzyme catalyses L-methionine + ATP + H2O = S-adenosyl-L-methionine + phosphate + diphosphate. Its pathway is amino-acid biosynthesis; S-adenosyl-L-methionine biosynthesis; S-adenosyl-L-methionine from L-methionine: step 1/1. Its activity is regulated as follows. Inhibited by 5,5'-dithiobis-2-nitrobenzoic acid (DTNB) and N-ethylmaleimide (NEM) (in vitro). Catalyzes the formation of S-adenosylmethionine from methionine and ATP. The reaction comprises two steps that are both catalyzed by the same enzyme: formation of S-adenosylmethionine (AdoMet) and triphosphate, and subsequent hydrolysis of the triphosphate. This is S-adenosylmethionine synthase 2 (SAM2) from Arabidopsis thaliana (Mouse-ear cress).